A 93-amino-acid polypeptide reads, in one-letter code: CRISPR-associated endoribonuclease Cas2 1 (93 aa).

Aspartate 8 is a Mg(2+) binding site.

The protein belongs to the CRISPR-associated endoribonuclease Cas2 protein family. As to quaternary structure, homodimer, forms a heterotetramer with a Cas1 homodimer. It depends on Mg(2+) as a cofactor.

Functionally, CRISPR (clustered regularly interspaced short palindromic repeat), is an adaptive immune system that provides protection against mobile genetic elements (viruses, transposable elements and conjugative plasmids). CRISPR clusters contain sequences complementary to antecedent mobile elements and target invading nucleic acids. CRISPR clusters are transcribed and processed into CRISPR RNA (crRNA). Functions as a ssRNA-specific endoribonuclease. Involved in the integration of spacer DNA into the CRISPR cassette. This Chloroflexus aurantiacus (strain ATCC 29366 / DSM 635 / J-10-fl) protein is CRISPR-associated endoribonuclease Cas2 1.